The primary structure comprises 511 residues: Maturase K (511 aa).

Belongs to the intron maturase 2 family. MatK subfamily.

It localises to the plastid. The protein localises to the chloroplast. Usually encoded in the trnK tRNA gene intron. Probably assists in splicing its own and other chloroplast group II introns. This chain is Maturase K, found in Hordeum bulbosum (Bulbous barley).